The primary structure comprises 853 residues: Stachyose synthase (853 aa).

Positions 1 to 11 (MAPPLNSTTSN) are excised as a propeptide.

This sequence belongs to the glycosyl hydrolases 36 family.

The protein resides in the cytoplasm. It carries out the reaction alpha-D-galactosyl-(1-&gt;3)-1D-myo-inositol + raffinose = stachyose + myo-inositol. Its pathway is glycan metabolism; stachyose biosynthesis; stachyose from raffinose: step 1/1. Catalyzes stachyose synthesis by transfer of a galactosyl moiety from galactinol to raffinose. Also catalyzes verbascose synthesis by galactosyl transfer from galactinol to stachyose or from one stachyose molecule to another. Oligosaccharides of the raffinose family play a protective role in maturation drying of seeds. They may act as cryoprotectants in frost-hardy plants. The protein is Stachyose synthase (STS1) of Pisum sativum (Garden pea).